We begin with the raw amino-acid sequence, 371 residues long: MPKFTARQNFPDYKSNGHKCMVGRHLTEDMYERLYELRTPNGVSIDKCIQPSVDNTGRIIGLVAGDPESYEVFKELFDAVINEKHGGFGPTDKHPPPDLNANALVGGQFDPKYVKSARIRTGRSVKGFCLPPSISRAERREVERIIVDALAGLEGDLAGVYYPLKKMTPEQEKQLIADHFLFQKPTGHLMVNSGAVRDWPDARGIWHNKDKTFLIWINEEDQVRIIAMQHGGDVKAVFERFSRGLTQIEGLMKKHGHEFAWSERLGYICTCPSNLGTGLRASVHLQLHKLSKHPKFEEIILAFHLQKRGTGGEHTEAVDDVYDISNRARLKKSEREFVQLLIDGVGKLIEYEKLLEAGKSIDDVLPASLKG.

In terms of domain architecture, Phosphagen kinase N-terminal spans 1-86; the sequence is MPKFTARQNF…FDAVINEKHG (86 aa). The Phosphagen kinase C-terminal domain maps to 113–355; sequence YVKSARIRTG…GKLIEYEKLL (243 aa). Residues 116–120, H179, R224, R280, 308–313, and D323 contribute to the ATP site; these read SARIR and RGTGGE.

This sequence belongs to the ATP:guanido phosphotransferase family. As to quaternary structure, homodimer.

It carries out the reaction L-lombricine + ATP = N-phospho-L-lombricine + ADP + H(+). In Eisenia fetida (Red wiggler worm), this protein is Lombricine kinase.